The following is a 542-amino-acid chain: Chaperonin GroEL 4 (542 aa).

ATP contacts are provided by residues 30–33 (TLGP), Lys51, 87–91 (DGTTT), Gly415, and Asp496.

This sequence belongs to the chaperonin (HSP60) family. Forms a cylinder of 14 subunits composed of two heptameric rings stacked back-to-back. Interacts with the co-chaperonin GroES.

It is found in the cytoplasm. The enzyme catalyses ATP + H2O + a folded polypeptide = ADP + phosphate + an unfolded polypeptide.. In terms of biological role, together with its co-chaperonin GroES, plays an essential role in assisting protein folding. The GroEL-GroES system forms a nano-cage that allows encapsulation of the non-native substrate proteins and provides a physical environment optimized to promote and accelerate protein folding. In Rhizobium etli (strain ATCC 51251 / DSM 11541 / JCM 21823 / NBRC 15573 / CFN 42), this protein is Chaperonin GroEL 4.